A 694-amino-acid chain; its full sequence is Elongation factor G (694 aa).

The region spanning 9 to 288 (DAIRNIGIMA…VIVKWLPSPL (280 aa)) is the tr-type G domain. GTP-binding positions include 18-25 (AHIDAGKT), 82-86 (DTPGH), and 136-139 (NKMD).

The protein belongs to the TRAFAC class translation factor GTPase superfamily. Classic translation factor GTPase family. EF-G/EF-2 subfamily.

Its subcellular location is the cytoplasm. Functionally, catalyzes the GTP-dependent ribosomal translocation step during translation elongation. During this step, the ribosome changes from the pre-translocational (PRE) to the post-translocational (POST) state as the newly formed A-site-bound peptidyl-tRNA and P-site-bound deacylated tRNA move to the P and E sites, respectively. Catalyzes the coordinated movement of the two tRNA molecules, the mRNA and conformational changes in the ribosome. The sequence is that of Elongation factor G from Chlamydia trachomatis serovar L2 (strain ATCC VR-902B / DSM 19102 / 434/Bu).